The chain runs to 385 residues: Spermidine/putrescine import ATP-binding protein PotA (385 aa).

The ABC transporter domain occupies 6 to 238 (IEFKNVSKVF…PINHFVATFI (233 aa)). An ATP-binding site is contributed by 40–47 (GASGSGKS).

Belongs to the ABC transporter superfamily. Spermidine/putrescine importer (TC 3.A.1.11.1) family. In terms of assembly, the complex is composed of two ATP-binding proteins (PotA), two transmembrane proteins (PotB and PotC) and a solute-binding protein (PotD).

The protein resides in the cell membrane. It carries out the reaction ATP + H2O + polyamine-[polyamine-binding protein]Side 1 = ADP + phosphate + polyamineSide 2 + [polyamine-binding protein]Side 1.. In terms of biological role, part of the ABC transporter complex PotABCD involved in spermidine/putrescine import. Responsible for energy coupling to the transport system. The chain is Spermidine/putrescine import ATP-binding protein PotA from Streptococcus pneumoniae serotype 4 (strain ATCC BAA-334 / TIGR4).